The following is an 89-amino-acid chain: Protein S100-A6 (89 aa).

2 consecutive EF-hand domains span residues Leu-12 to Lys-47 and Leu-48 to Ile-83. Thr-28 and Glu-33 together coordinate Ca(2+). N6-acetyllysine is present on Lys-40. Ser-46 is modified (phosphoserine). Residue Lys-47 is modified to N6-acetyllysine; alternate. Lys-47 bears the N6-succinyllysine; alternate mark. Ca(2+) is bound by residues Asp-61, Asn-63, Asp-65, Glu-67, and Glu-72.

Belongs to the S-100 family. Homodimer; head to tail assembly of 2 subunits. Interacts with CACYBP in a calcium-dependent manner. Interacts with ANXA2 and ANXA11 (via N-terminus). Interacts with SUGT1. Interacts with TP53; has higher affinity for TP53 that is phosphorylated on its N-terminal domain, and lower affinity for TP53 that is phosphorylated on its C-terminal domain. Interacts with tropomyosin. Interacts with FKBP4. Interacts with PPP5C (via TPR repeats); the interaction is calcium-dependent and modulates PPP5C activity. Interacts with TPPP; this interaction inhibits TPPP dimerization.

Its subcellular location is the nucleus envelope. The protein localises to the cytoplasm. The protein resides in the cell membrane. Functionally, may function as calcium sensor and modulator, contributing to cellular calcium signaling. May function by interacting with other proteins, such as TPR-containing proteins, and indirectly play a role in many physiological processes such as the reorganization of the actin cytoskeleton and in cell motility. Binds 2 calcium ions. Calcium binding is cooperative. This Mus musculus (Mouse) protein is Protein S100-A6 (S100a6).